We begin with the raw amino-acid sequence, 451 residues long: MDQTPSYSPPSGTAVILAAGLGTRMKSTRPKVLHPIAGRSMLRHLIAACQPVFSHIVVVIGPDMDSVAREAAPHPTVVQQERLGTAHAALQAMALVQQGEVAILYGDNPLISTATLHTLVQRRRQGDAVLAMLAMRPPEPGRYGRVITEKYQTGDYVSRIVEYAEANEQERAVTLCNAGVFCADAASMAAWLGGVENANSKGEYYLGDIIPLAIAGGGHVAAVEAPYEELRGINSKVELAEAEATVQIVLRRKALENGVTMTAPETVFLSADTLLAPDVLVGPHVVFGPGVTVEEGAEIRAFSHLEGCHVGRHTLIGPYARLRPGSVLGAGAHVGNFVELKQATLGEGAKANHLTYLGDVEVGARANIGAGTITCNYDGVHKHRTEIGDDAFIGSDTALVAPVRIGRGAITGAGSVIVDDVPADALALARGRQVNKPERAAEIRRQLKGSV.

Residues 1 to 236 are pyrophosphorylase; sequence MDQTPSYSPP…YEELRGINSK (236 aa). UDP-N-acetyl-alpha-D-glucosamine-binding positions include 17–20, Lys-31, Gln-79, 84–85, 105–107, Gly-144, Glu-162, Asn-177, and Asn-234; these read LAAG, GT, and YGD. Residue Asp-107 coordinates Mg(2+). Residue Asn-234 participates in Mg(2+) binding. The linker stretch occupies residues 237–257; that stretch reads VELAEAEATVQIVLRRKALEN. An N-acetyltransferase region spans residues 258 to 451; the sequence is GVTMTAPETV…EIRRQLKGSV (194 aa). UDP-N-acetyl-alpha-D-glucosamine-binding residues include Arg-323 and Lys-341. Residue His-353 is the Proton acceptor of the active site. Positions 356 and 367 each coordinate UDP-N-acetyl-alpha-D-glucosamine. Acetyl-CoA-binding positions include Ala-370, 376–377, Ser-395, Ala-413, and Arg-430; that span reads NY.

This sequence in the N-terminal section; belongs to the N-acetylglucosamine-1-phosphate uridyltransferase family. It in the C-terminal section; belongs to the transferase hexapeptide repeat family. Homotrimer. Requires Mg(2+) as cofactor.

The protein resides in the cytoplasm. The enzyme catalyses alpha-D-glucosamine 1-phosphate + acetyl-CoA = N-acetyl-alpha-D-glucosamine 1-phosphate + CoA + H(+). It catalyses the reaction N-acetyl-alpha-D-glucosamine 1-phosphate + UTP + H(+) = UDP-N-acetyl-alpha-D-glucosamine + diphosphate. It functions in the pathway nucleotide-sugar biosynthesis; UDP-N-acetyl-alpha-D-glucosamine biosynthesis; N-acetyl-alpha-D-glucosamine 1-phosphate from alpha-D-glucosamine 6-phosphate (route II): step 2/2. The protein operates within nucleotide-sugar biosynthesis; UDP-N-acetyl-alpha-D-glucosamine biosynthesis; UDP-N-acetyl-alpha-D-glucosamine from N-acetyl-alpha-D-glucosamine 1-phosphate: step 1/1. It participates in bacterial outer membrane biogenesis; LPS lipid A biosynthesis. Its function is as follows. Catalyzes the last two sequential reactions in the de novo biosynthetic pathway for UDP-N-acetylglucosamine (UDP-GlcNAc). The C-terminal domain catalyzes the transfer of acetyl group from acetyl coenzyme A to glucosamine-1-phosphate (GlcN-1-P) to produce N-acetylglucosamine-1-phosphate (GlcNAc-1-P), which is converted into UDP-GlcNAc by the transfer of uridine 5-monophosphate (from uridine 5-triphosphate), a reaction catalyzed by the N-terminal domain. The sequence is that of Bifunctional protein GlmU from Granulibacter bethesdensis (strain ATCC BAA-1260 / CGDNIH1).